The following is a 166-amino-acid chain: NAD(P)H-quinone oxidoreductase subunit I, chloroplastic (166 aa).

4Fe-4S ferredoxin-type domains are found at residues 55-84 (GRIH…VDWK) and 95-124 (LNYS…MTEE). 8 residues coordinate [4Fe-4S] cluster: C64, C67, C70, C74, C104, C107, C110, and C114.

The protein belongs to the complex I 23 kDa subunit family. In terms of assembly, NDH is composed of at least 16 different subunits, 5 of which are encoded in the nucleus. [4Fe-4S] cluster is required as a cofactor.

The protein resides in the plastid. It localises to the chloroplast thylakoid membrane. The catalysed reaction is a plastoquinone + NADH + (n+1) H(+)(in) = a plastoquinol + NAD(+) + n H(+)(out). It catalyses the reaction a plastoquinone + NADPH + (n+1) H(+)(in) = a plastoquinol + NADP(+) + n H(+)(out). Its function is as follows. NDH shuttles electrons from NAD(P)H:plastoquinone, via FMN and iron-sulfur (Fe-S) centers, to quinones in the photosynthetic chain and possibly in a chloroplast respiratory chain. The immediate electron acceptor for the enzyme in this species is believed to be plastoquinone. Couples the redox reaction to proton translocation, and thus conserves the redox energy in a proton gradient. The sequence is that of NAD(P)H-quinone oxidoreductase subunit I, chloroplastic from Sigesbeckia blakei.